We begin with the raw amino-acid sequence, 409 residues long: MVDRWYNIAADLPAVLAPPKDPDEGESRIGLLTRILPSALIDQEFSAERWITVPEEVRDAYRRVGRPTPLLRAEGLERALGTGVRIYYKYEGVLPVGSHKLNTALAQAYYAKADGAVEVATETGAGQWGMAVSLAAALFGLKAVVFMTRSSYNSKRQRLTFMRTYGATVYPSPSEVTEAGRRHYRPDHPGSLGIAISEAVEYVLSGEKRHYLPGSVLEFVLMHQTVIGLEAVRQLPEEPDAAVACVGGGSNFAGFTYPMIGMKLRGEGFDKTRFVAVEAEAAPKLTKGEYKYDFPDAVGILPMIKMYTLGHDYVPPPVHAAGLRYHGAAPSLSLLRKLGIVEPLSYPQEEVMKAAVLFARTEGIVPAPESAHAIRAVLDLAKKLPRGSVIAFNLSGHGLLDSDAYEKFL.

An N6-(pyridoxal phosphate)lysine modification is found at lysine 100.

The protein belongs to the TrpB family. As to quaternary structure, tetramer of two alpha and two beta chains. Requires pyridoxal 5'-phosphate as cofactor.

The catalysed reaction is (1S,2R)-1-C-(indol-3-yl)glycerol 3-phosphate + L-serine = D-glyceraldehyde 3-phosphate + L-tryptophan + H2O. Its pathway is amino-acid biosynthesis; L-tryptophan biosynthesis; L-tryptophan from chorismate: step 5/5. Its function is as follows. The beta subunit is responsible for the synthesis of L-tryptophan from indole and L-serine. The protein is Tryptophan synthase beta chain of Pyrobaculum arsenaticum (strain DSM 13514 / JCM 11321 / PZ6).